Here is a 1385-residue protein sequence, read N- to C-terminus: DNA-directed RNA polymerase subunit beta' (1385 aa).

Cysteine 72, cysteine 74, cysteine 87, and cysteine 90 together coordinate Zn(2+). Positions 467, 469, and 471 each coordinate Mg(2+). Zn(2+) is bound by residues cysteine 829, cysteine 910, cysteine 917, and cysteine 920.

It belongs to the RNA polymerase beta' chain family. In terms of assembly, the RNAP catalytic core consists of 2 alpha, 1 beta, 1 beta' and 1 omega subunit. When a sigma factor is associated with the core the holoenzyme is formed, which can initiate transcription. Mg(2+) serves as cofactor. The cofactor is Zn(2+).

It catalyses the reaction RNA(n) + a ribonucleoside 5'-triphosphate = RNA(n+1) + diphosphate. Functionally, DNA-dependent RNA polymerase catalyzes the transcription of DNA into RNA using the four ribonucleoside triphosphates as substrates. This is DNA-directed RNA polymerase subunit beta' from Elusimicrobium minutum (strain Pei191).